The chain runs to 171 residues: UPF0312 protein SAOUHSC_03022 (171 aa).

This sequence belongs to the UPF0312 family.

The protein is UPF0312 protein SAOUHSC_03022 of Staphylococcus aureus (strain NCTC 8325 / PS 47).